The sequence spans 243 residues: Probable transcriptional regulatory protein Tbd_2215 (243 aa).

It belongs to the TACO1 family.

Its subcellular location is the cytoplasm. The protein is Probable transcriptional regulatory protein Tbd_2215 of Thiobacillus denitrificans (strain ATCC 25259 / T1).